Here is a 218-residue protein sequence, read N- to C-terminus: Small ribosomal subunit protein uS5 (218 aa).

The S5 DRBM domain maps to 66 to 129 (LKQELLNVNL…REAKLNLVPV (64 aa)).

It belongs to the universal ribosomal protein uS5 family. Part of the 30S ribosomal subunit. Contacts protein S4.

Functionally, with S4 and S12 plays an important role in translational accuracy. In Pyrobaculum aerophilum (strain ATCC 51768 / DSM 7523 / JCM 9630 / CIP 104966 / NBRC 100827 / IM2), this protein is Small ribosomal subunit protein uS5.